Here is a 494-residue protein sequence, read N- to C-terminus: MDSFSLLAALFFISAATWFISSRRRRNLPPGPFPYPIVGNMLQLGAQPHETFAKLSKKYGPLMSVHLGSLYTVIVSSPEMAKEIMLKYGTVFSGRTVAQAVHACDHDKISMGFLPIGAEWRDMRKICKEQMFSHQSMEDSQGLRKQKLQQLLDHAHRCSEQGRAIDIREAAFITTLNLMSATLFSMQATEFDSKVTMEFKEIIEGVASIVGVPNFADYFPILRPFDPQGVKRRADVYFGRLLALIEGYLNDRIQSRKANPDAPKKDDFLETLVDILNSNDNKLKTDHLLHLMLDLFVGGSETSTTEIEWIMEELVAHPDKMAKVKAELKSVMGDEKVVDESLMPRLPYLQAVVKESMRLHPPGPLLLPRKAESDQVVNGYLIPKGTQVLINAWAMGRDSTIWNNPDAFQPERFLDNKIDFKGQDYELIPFGSGRRVCPGMPLANRMLHTVTATLVHNFDWKLERPDAPLAEHQGVLFGFAVRRAVPLRIVPYKA.

The chain crosses the membrane as a helical span at residues 3-23 (SFSLLAALFFISAATWFISSR). C437 is a heme binding site.

This sequence belongs to the cytochrome P450 family. Heme serves as cofactor. As to expression, expressed in roots.

The protein localises to the membrane. It carries out the reaction ferruginol + 2 reduced [NADPH--hemoprotein reductase] + 2 O2 = sugiol + 2 oxidized [NADPH--hemoprotein reductase] + 3 H2O + 2 H(+). It catalyses the reaction ferruginol + reduced [NADPH--hemoprotein reductase] + O2 = 11-hydroxyferruginol + oxidized [NADPH--hemoprotein reductase] + H2O + H(+). The enzyme catalyses 11-hydroxyferruginol + 2 reduced [NADPH--hemoprotein reductase] + 2 O2 = 11-hydroxysugiol + 2 oxidized [NADPH--hemoprotein reductase] + 3 H2O + 2 H(+). It functions in the pathway secondary metabolite biosynthesis; terpenoid biosynthesis. In terms of biological role, monooxygenase that oxidizes ferruginol to produce sugiol. Oxidizes ferruginol at C-12 to produce 11-hydroxyferruginol. Can oxidize 11-hydroxyferruginol to 11-hydroxysugiol. These products are intermediates in tanshinone biosynthesis. This is Sugiol synthase from Salvia miltiorrhiza (Chinese sage).